Reading from the N-terminus, the 387-residue chain is Methylthioribose-1-phosphate isomerase (387 aa).

The active-site Proton donor is the aspartate 257.

Belongs to the eIF-2B alpha/beta/delta subunits family. MtnA subfamily.

Its subcellular location is the cytoplasm. It is found in the nucleus. It catalyses the reaction 5-(methylsulfanyl)-alpha-D-ribose 1-phosphate = 5-(methylsulfanyl)-D-ribulose 1-phosphate. It functions in the pathway amino-acid biosynthesis; L-methionine biosynthesis via salvage pathway; L-methionine from S-methyl-5-thio-alpha-D-ribose 1-phosphate: step 1/6. Its function is as follows. Catalyzes the interconversion of methylthioribose-1-phosphate (MTR-1-P) into methylthioribulose-1-phosphate (MTRu-1-P). The sequence is that of Methylthioribose-1-phosphate isomerase (mri1) from Neosartorya fischeri (strain ATCC 1020 / DSM 3700 / CBS 544.65 / FGSC A1164 / JCM 1740 / NRRL 181 / WB 181) (Aspergillus fischerianus).